The sequence spans 396 residues: Tryptophan synthase beta chain (396 aa).

At lysine 86 the chain carries N6-(pyridoxal phosphate)lysine.

Belongs to the TrpB family. In terms of assembly, tetramer of two alpha and two beta chains. The cofactor is pyridoxal 5'-phosphate.

The catalysed reaction is (1S,2R)-1-C-(indol-3-yl)glycerol 3-phosphate + L-serine = D-glyceraldehyde 3-phosphate + L-tryptophan + H2O. It functions in the pathway amino-acid biosynthesis; L-tryptophan biosynthesis; L-tryptophan from chorismate: step 5/5. Functionally, the beta subunit is responsible for the synthesis of L-tryptophan from indole and L-serine. This Sodalis glossinidius (strain morsitans) protein is Tryptophan synthase beta chain.